The primary structure comprises 116 residues: MDKKTSRLRRATRARKKIQELGVNRLVVHRTPRHTYAQVIDANAQVVAAASTAEKAVSEQLKYTGNVEAAKAVGKTIAERAIEKGVTVVAFDRSGFKYHGRVAALADAAREAGLQF.

The protein belongs to the universal ribosomal protein uL18 family. In terms of assembly, part of the 50S ribosomal subunit; part of the 5S rRNA/L5/L18/L25 subcomplex. Contacts the 5S and 23S rRNAs.

This is one of the proteins that bind and probably mediate the attachment of the 5S RNA into the large ribosomal subunit, where it forms part of the central protuberance. This is Large ribosomal subunit protein uL18 from Shewanella loihica (strain ATCC BAA-1088 / PV-4).